Consider the following 97-residue polypeptide: Small cell adhesion glycoprotein (97 aa).

The Extracellular portion of the chain corresponds to 1 to 36 (MNNLPATPSPEELMTTPVFQAPETLSPQAEEASTAL). An O-linked (GalNAc...) threonine glycan is attached at Thr-7. Ser-9 is a glycosylation site (O-linked (GalNAc...) serine). O-linked (GalNAc...) threonine glycans are attached at residues Thr-15, Thr-16, and Thr-24. The O-linked (GalNAc...) serine glycan is linked to Ser-26. Residues 37–57 (IAVVITVVFLTLLSVVTLIFF) form a helical; Signal-anchor for type III membrane protein membrane-spanning segment. Topologically, residues 58-97 (HLYKNKGSYVTYEPAEGEPSAILQMETDSAKGREKEEYFI) are cytoplasmic.

This sequence belongs to the SMAGP family. In terms of processing, O-glycosylated. The O-glycan is modified with sialic acid residues.

The protein localises to the cell membrane. Its subcellular location is the cytoplasmic vesicle membrane. In terms of biological role, may play a role in epithelial cell-cell contacts. May play a role in tumor invasiveness and metastasis formation. The polypeptide is Small cell adhesion glycoprotein (Smagp) (Mus musculus (Mouse)).